We begin with the raw amino-acid sequence, 226 residues long: Ribonuclease HII (226 aa).

An RNase H type-2 domain is found at glycine 29–asparagine 220. A divalent metal cation contacts are provided by aspartate 35, glutamate 36, and aspartate 129.

It belongs to the RNase HII family. Requires Mn(2+) as cofactor. Mg(2+) serves as cofactor.

The protein localises to the cytoplasm. It catalyses the reaction Endonucleolytic cleavage to 5'-phosphomonoester.. Its function is as follows. Endonuclease that specifically degrades the RNA of RNA-DNA hybrids. The protein is Ribonuclease HII of Rhodococcus opacus (strain B4).